The chain runs to 425 residues: MPPRDSYSYAAPPSAQLHEVDTPQEHDKKELVIGDRAYDVTNFVKRHPGGKIIAYQVGTDATDAYKQFHVRSAKADKMLKSLPSRPVHKGYSPRRADLIADFQEFTKQLEAEGMFEPSLPHVAYRLAEVIAMHVAGAALIWHGYTFAGIAMLGVVQGRCGWLMHEGGHYSLTGNIAFDRAIQVACYGLGCGMSGAWWRNQHNKHHATPQKLQHDVDLDTLPLVAFHERIAAKVKSPAMKAWLSMQAKLFAPVTTLLVALGWQLYLHPRHMLRTKHYDELAMLGIRYGLVGYLAANYGAGYVLACYLLYVQLGAMYIFCNFAVSHTHLPVVEPNEHATWVEYAANHTTNCSPSWWCDWWMSYLNYQIEHHLYPSMPQFRHPKIAPRVKQLFEKHGLHYDVRGYFEAMADTFANLDNVAHAPEKKMQ.

The segment at 1–25 is disordered; that stretch reads MPPRDSYSYAAPPSAQLHEVDTPQE. The Cytochrome b5 heme-binding domain occupies 18-93; it reads HEVDTPQEHD…SRPVHKGYSP (76 aa). H47 and H69 together coordinate heme. Residues 134-154 traverse the membrane as a helical segment; that stretch reads VAGAALIWHGYTFAGIAMLGV. Residues 164–168 carry the Histidine box-1 motif; it reads HEGGH. The helical transmembrane segment at 175 to 197 threads the bilayer; it reads IAFDRAIQVACYGLGCGMSGAWW. Positions 201–206 match the Histidine box-2 motif; it reads HNKHHA. Transmembrane regions (helical) follow at residues 241–261 and 297–317; these read WLSMQAKLFAPVTTLLVALGW and GAGYVLACYLLYVQLGAMYIF. Residues 365–369 carry the Histidine box-3 motif; sequence QIEHH.

It belongs to the fatty acid desaturase type 1 family. Fe(2+) is required as a cofactor.

The protein resides in the membrane. It carries out the reaction an (8Z,11Z,14Z)-icosatrienoyl-containing glycerolipid + 2 Fe(II)-[cytochrome b5] + O2 + 2 H(+) = (5Z,8Z,11Z,14Z)-eicosatetraenoyl-containing glycerolipid + 2 Fe(III)-[cytochrome b5] + 2 H2O. The catalysed reaction is an (8Z,11Z,14Z,17Z)-eicosatetraenoyl-containing glycerolipid + 2 Fe(II)-[cytochrome b5] + O2 + 2 H(+) = a (5Z,8Z,11Z,14Z,17Z)-eicosapentaenoyl-containing glycerolipid + 2 Fe(III)-[cytochrome b5] + 2 H2O. In terms of biological role, fatty acid desaturase that introduces a cis double bond at the 5-position in 20-carbon polyunsaturated fatty acids incorporated in a glycerolipid that contain a Delta(8) double bond. This is Acyl-lipid (8-3)-desaturase from Rebecca salina (Marine microalga).